A 158-amino-acid polypeptide reads, in one-letter code: SsrA-binding protein (158 aa).

The span at 136-151 (KRADSKSRDWARDKQR) shows a compositional bias: basic and acidic residues. Positions 136-158 (KRADSKSRDWARDKQRIMKHSTR) are disordered.

It belongs to the SmpB family.

The protein resides in the cytoplasm. Its function is as follows. Required for rescue of stalled ribosomes mediated by trans-translation. Binds to transfer-messenger RNA (tmRNA), required for stable association of tmRNA with ribosomes. tmRNA and SmpB together mimic tRNA shape, replacing the anticodon stem-loop with SmpB. tmRNA is encoded by the ssrA gene; the 2 termini fold to resemble tRNA(Ala) and it encodes a 'tag peptide', a short internal open reading frame. During trans-translation Ala-aminoacylated tmRNA acts like a tRNA, entering the A-site of stalled ribosomes, displacing the stalled mRNA. The ribosome then switches to translate the ORF on the tmRNA; the nascent peptide is terminated with the 'tag peptide' encoded by the tmRNA and targeted for degradation. The ribosome is freed to recommence translation, which seems to be the essential function of trans-translation. This is SsrA-binding protein from Photobacterium profundum (strain SS9).